A 278-amino-acid polypeptide reads, in one-letter code: MSVKAYFELVRIHNVIGSAISVFMGYVVASEWKIVPIKLILAMIVVSVIAAGGYIINDVFDIEIDKINKPNRPLPSGRIKISRARSLSIVLFLVGIVLSVLLNIYAFIIALLTVLALYYYAKDLKKQGLVGNLIVALTSALSAFYGGLAFFEGSWVIRTLIPTLYIFFFTLTREFVKGIEDVKGDMTNGVKTLAVRVGIEKTWFISKIILVILIVTSFIPYFFGFNIIYLIGILFLDIILILVVLLRHDIESASKARAYMKVYALGTLILFALGTLPI.

The next 8 membrane-spanning stretches (helical) occupy residues 15–35 (VIGS…WKIV), 36–56 (PIKL…GYII), 89–109 (IVLF…AFII), 133–153 (LIVA…FFEG), 159–179 (TLIP…VKGI), 203–223 (WFIS…PYFF), 225–245 (FNII…LVVL), and 258–278 (AYMK…TLPI).

It belongs to the UbiA prenyltransferase family. DGGGP synthase subfamily. Mg(2+) is required as a cofactor.

The protein resides in the cell membrane. It catalyses the reaction sn-3-O-(geranylgeranyl)glycerol 1-phosphate + (2E,6E,10E)-geranylgeranyl diphosphate = 2,3-bis-O-(geranylgeranyl)-sn-glycerol 1-phosphate + diphosphate. It participates in membrane lipid metabolism; glycerophospholipid metabolism. In terms of biological role, prenyltransferase that catalyzes the transfer of the geranylgeranyl moiety of geranylgeranyl diphosphate (GGPP) to the C2 hydroxyl of (S)-3-O-geranylgeranylglyceryl phosphate (GGGP). This reaction is the second ether-bond-formation step in the biosynthesis of archaeal membrane lipids. The protein is Digeranylgeranylglyceryl phosphate synthase of Sulfurisphaera tokodaii (strain DSM 16993 / JCM 10545 / NBRC 100140 / 7) (Sulfolobus tokodaii).